The chain runs to 368 residues: Phosphate acyltransferase (368 aa).

Residues 334–368 form a disordered region; it reads AAPLGESGRDADGAGQASPSAGQPAEPSAALSSKT.

Belongs to the PlsX family. In terms of assembly, homodimer. Probably interacts with PlsY.

Its subcellular location is the cytoplasm. It carries out the reaction a fatty acyl-[ACP] + phosphate = an acyl phosphate + holo-[ACP]. It functions in the pathway lipid metabolism; phospholipid metabolism. Its function is as follows. Catalyzes the reversible formation of acyl-phosphate (acyl-PO(4)) from acyl-[acyl-carrier-protein] (acyl-ACP). This enzyme utilizes acyl-ACP as fatty acyl donor, but not acyl-CoA. The chain is Phosphate acyltransferase from Burkholderia thailandensis (strain ATCC 700388 / DSM 13276 / CCUG 48851 / CIP 106301 / E264).